A 251-amino-acid chain; its full sequence is MGGINVIEIEIVPDHESASARVAGFIVEQIRRKPASVLGLATGGTPERTYELLVEKVNAGHLSFSQATTFNLDEYVGLLPDHPQSYHAYMRFRLFGETDFDAERTHLPKGTADELSDAGGQYEALIAEAGGIDLQLLGLGANGHIGFNEPGATEDSRTRVVDLTEETIAANARFFDSPEDVPRRALTMGIATILEAREIVLIATGESKAEAVERSVRGPVAPQMPASFLQQHPSVTFVLDEAAASLLDKRA.

Aspartate 73 acts as the Proton acceptor; for enolization step in catalysis. The active-site For ring-opening step is the asparagine 142. The Proton acceptor; for ring-opening step role is filled by histidine 144. The active-site For ring-opening step is glutamate 149.

The protein belongs to the glucosamine/galactosamine-6-phosphate isomerase family. NagB subfamily.

It carries out the reaction alpha-D-glucosamine 6-phosphate + H2O = beta-D-fructose 6-phosphate + NH4(+). It functions in the pathway amino-sugar metabolism; N-acetylneuraminate degradation; D-fructose 6-phosphate from N-acetylneuraminate: step 5/5. In terms of biological role, catalyzes the reversible isomerization-deamination of glucosamine 6-phosphate (GlcN6P) to form fructose 6-phosphate (Fru6P) and ammonium ion. The polypeptide is Glucosamine-6-phosphate deaminase (Rhodopirellula baltica (strain DSM 10527 / NCIMB 13988 / SH1)).